Reading from the N-terminus, the 360-residue chain is Protein Wnt-2 (360 aa).

Residues 1 to 37 (MIPRRSCWLILLLNLLNVQSLLDASWWSTVAQLSTAL) form the signal peptide. Intrachain disulfides connect cysteine 80–cysteine 91, cysteine 130–cysteine 138, cysteine 140–cysteine 158, cysteine 213–cysteine 227, cysteine 215–cysteine 222, cysteine 289–cysteine 320, cysteine 305–cysteine 315, cysteine 319–cysteine 359, cysteine 335–cysteine 350, cysteine 337–cysteine 347, and cysteine 342–cysteine 343. Residue asparagine 90 is glycosylated (N-linked (GlcNAc...) asparagine). The O-palmitoleoyl serine; by mom-1 moiety is linked to residue serine 219. The N-linked (GlcNAc...) asparagine glycan is linked to asparagine 352.

Belongs to the Wnt family. Post-translationally, palmitoleoylation is required for efficient binding to frizzled receptors. Depalmitoleoylation leads to Wnt signaling pathway inhibition. In terms of tissue distribution, expressed in intestine, pharynx, anterior body wall muscle, vulva, some pharyngeal neurons and SMD head neurons. Expressed along the boundary between the intestine and muscle or hypodermis, but is also expressed in the hypodermis in cells including seam cells.

Its subcellular location is the secreted. It is found in the extracellular space. The protein localises to the extracellular matrix. Its function is as follows. Ligand for members of the frizzled family of seven transmembrane receptors. Probable developmental protein. May be a signaling molecule which affects the development of discrete regions of tissues. Is likely to signal over only few cell diameters. Involved in the correct positioning of the developing nerve ring and in axon guidance of SIA and SIB neurons, probably by binding to tyrosine kinase receptor cam-1. In addition, regulates the positioning of some head neuronal cells, muscle arms associated with the nerve ring and the excretory pore. Together with Wnt ligand cwn-1, regulates the migration of CAN, ALM, BDU and HSN neurons during embryogenesis, the migration of QL and QR neuroblast descendants during larval development, and polarity of ALM neurons. May act through the wnt receptor cfz-2 to regulate QR neuroblast descendant migration, and to direct ALM migration. Also plays a role in axon growth and guidance in HSN and male CP neurons. In addition, together with wnt ligand cwn-1, negatively regulates developmental neurite pruning of AIM neurons probably by acting as a ligand for receptor tyrosine kinase cam-1. Through the cam-1 receptor also probably regulates the outgrowth of neurites from RME GABAergic motor neurons. May act redundantly with other Wnt ligands such as cwn-1 and mom-2 to control seam cell polarity. This chain is Protein Wnt-2, found in Caenorhabditis elegans.